The following is a 475-amino-acid chain: Ribulose bisphosphate carboxylase large chain (475 aa).

A propeptide spanning residues 1–2 is cleaved from the precursor; the sequence is MS. Proline 3 carries the post-translational modification N-acetylproline. At lysine 14 the chain carries N6,N6,N6-trimethyllysine. Asparagine 123 and threonine 173 together coordinate substrate. The active-site Proton acceptor is the lysine 175. Residue lysine 177 coordinates substrate. Mg(2+)-binding residues include lysine 201, aspartate 203, and glutamate 204. Position 201 is an N6-carboxylysine (lysine 201). The active-site Proton acceptor is the histidine 294. 3 residues coordinate substrate: arginine 295, histidine 327, and serine 379.

Belongs to the RuBisCO large chain family. Type I subfamily. In terms of assembly, heterohexadecamer of 8 large chains and 8 small chains; disulfide-linked. The disulfide link is formed within the large subunit homodimers. Mg(2+) is required as a cofactor. Post-translationally, the disulfide bond which can form in the large chain dimeric partners within the hexadecamer appears to be associated with oxidative stress and protein turnover.

It localises to the plastid. The protein resides in the chloroplast. It catalyses the reaction 2 (2R)-3-phosphoglycerate + 2 H(+) = D-ribulose 1,5-bisphosphate + CO2 + H2O. The catalysed reaction is D-ribulose 1,5-bisphosphate + O2 = 2-phosphoglycolate + (2R)-3-phosphoglycerate + 2 H(+). Functionally, ruBisCO catalyzes two reactions: the carboxylation of D-ribulose 1,5-bisphosphate, the primary event in carbon dioxide fixation, as well as the oxidative fragmentation of the pentose substrate in the photorespiration process. Both reactions occur simultaneously and in competition at the same active site. The sequence is that of Ribulose bisphosphate carboxylase large chain from Populus trichocarpa (Western balsam poplar).